A 152-amino-acid chain; its full sequence is uncharacterized protein (152 aa).

Belongs to the IIV-6 145L family.

This is an uncharacterized protein from Invertebrate iridescent virus 3 (IIV-3).